The following is a 113-amino-acid chain: Transcriptional activator RamA (113 aa).

Residues 9–107 (DTIVEWIDDN…HQPPGAYRKE (99 aa)) enclose the HTH araC/xylS-type domain. DNA-binding regions (H-T-H motif) lie at residues 26–47 (EDIARHAGYSKWHLQRLFLQYK) and 74–97 (VYEICLRYGFESQQTFTRIFTRTF).

Its function is as follows. Probable transcriptional activator. This Enterobacter cloacae protein is Transcriptional activator RamA (ramA).